A 343-amino-acid chain; its full sequence is Ribosomal RNA small subunit methyltransferase C (343 aa).

The protein belongs to the methyltransferase superfamily. RsmC family. As to quaternary structure, monomer.

It is found in the cytoplasm. The catalysed reaction is guanosine(1207) in 16S rRNA + S-adenosyl-L-methionine = N(2)-methylguanosine(1207) in 16S rRNA + S-adenosyl-L-homocysteine + H(+). In terms of biological role, specifically methylates the guanine in position 1207 of 16S rRNA in the 30S particle. In Shewanella sediminis (strain HAW-EB3), this protein is Ribosomal RNA small subunit methyltransferase C.